A 481-amino-acid chain; its full sequence is Serine/threonine-protein kinase US3 (481 aa).

Residues 12–63 (GQGRRKEEAVPPETKPSRVFPHGPFYTPAEDACLDSPPPETPKPSHTTPPSE) are disordered. Residues 191–478 (FTIHGALTPG…AAELLCLPLF (288 aa)) enclose the Protein kinase domain. ATP-binding positions include 197 to 205 (LTPGSEGCV) and lysine 220. Residue aspartate 305 is the Proton acceptor of the active site.

It belongs to the protein kinase superfamily. Ser/Thr protein kinase family. As to quaternary structure, interacts with host LAT; this interaction prevents LAT activation of TRAF6. Post-translationally, phosphorylated by UL13; this phosphorylation regulates subsequent phosphorylation of UL31 and UL34 by US3. Autophosphorylated.

The protein localises to the host cytoplasm. The protein resides in the host nucleus. It catalyses the reaction L-seryl-[protein] + ATP = O-phospho-L-seryl-[protein] + ADP + H(+). The enzyme catalyses L-threonyl-[protein] + ATP = O-phospho-L-threonyl-[protein] + ADP + H(+). Its function is as follows. Multifunctional serine/threonine kinase that plays a role in several processes including egress of virus particles from the nucleus, modulation of the actin cytoskeleton and inhibition of host immune response. Phosphorylates UL31 and UL34, two critical regulators of capsid budding from nucleus to endoplasmic reticulum, thereby facilitating virion egress. Modulates and redistributes host components of the nuclear envelope, including LMNA, emerin/EMD and the nuclear matrix protein MATR3. In turn, facilitates nuclear pore impairment and capsid release through impaired nuclear envelope. Phosphorylates envelope glycoprotein B (gB), probably to direct it to the cell surface. Promotes virus intracellular spread by restructuring host cell cytoskeleton. Blocks host apoptosis to extend cell survival and allow efficient viral replication. Promotes viral gene expression by phosphorylating host HDAC2 to reduce viral genome silencing. Strongly inhibits TCR-activated signal transduction in T-cells by reducing the ubiquitination of LAT and TRAF6, leading to a suboptimal activation of LAT. Subverts host antiviral innate immunity by inhibiting type I interferon production through hyperphosphorylation of beta-catenin/CTNNB1. In addition, phosphorylates the RNA sensor RIGI and the transcription factor IRF3 to prevent the RLR-mediated antiviral signaling pathway. Hyperphosphorylates host RELA and thereby dampens NF-kappa-B signaling. Acts as an immunoevasin partly responsible for inhibition of MR1 expression and antigen presentation in response to bacterial infection. This chain is Serine/threonine-protein kinase US3 (US3), found in Human herpesvirus 1 (strain 17) (HHV-1).